Reading from the N-terminus, the 263-residue chain is Acetylglutamate kinase (263 aa).

Substrate contacts are provided by residues 49–50, R71, and N163; that span reads GG.

This sequence belongs to the acetylglutamate kinase family. ArgB subfamily.

It localises to the cytoplasm. The enzyme catalyses N-acetyl-L-glutamate + ATP = N-acetyl-L-glutamyl 5-phosphate + ADP. The protein operates within amino-acid biosynthesis; L-arginine biosynthesis; N(2)-acetyl-L-ornithine from L-glutamate: step 2/4. Catalyzes the ATP-dependent phosphorylation of N-acetyl-L-glutamate. This is Acetylglutamate kinase from Moritella abyssi.